A 341-amino-acid polypeptide reads, in one-letter code: MRKVVLITGASSGIGLALCKRLLAEDDELHLCLACRNMSKAEAVCAALLASHPTAEVTIVQVDVSNLQSVFRASKELKQRFQRLDCIYLNAGIMPNPQLNIKALFFGLFSRKVIHMFSTAEGLLTQGDKITADGLQEVFETNVFGHFILIRELEPLLCHSDNPSQLIWTSSRSARKSNFSLEDFQHSKGKEPYSSSKYATDLLSVALNRNFNQQGLYSNVACPGTALTNLTYGILPPFIWTLLMPAILLLRFFANAFTLTPYNGTEALVWLFHQKPESLNPLIKYLSATTGFGRNYIMTQKMDLDEDTAEKFYQKLLELEKHIRVTIQKTDNQARLSGSCL.

The Extracellular portion of the chain corresponds to 1 to 229; sequence MRKVVLITGA…VACPGTALTN (229 aa). An NAD(+)-binding site is contributed by 8 to 15; that stretch reads TGASSGIG. Residue Asn-37 is glycosylated (N-linked (GlcNAc...) asparagine). Residue Ser-171 participates in substrate binding. An N-linked (GlcNAc...) asparagine glycan is attached at Asn-178. Tyr-193 functions as the Proton acceptor in the catalytic mechanism. Asn-229 carries an N-linked (GlcNAc...) asparagine glycan. The chain crosses the membrane as a helical span at residues 230–250; the sequence is LTYGILPPFIWTLLMPAILLL. Topologically, residues 251–341 are cytoplasmic; it reads RFFANAFTLT…NQARLSGSCL (91 aa).

Belongs to the short-chain dehydrogenases/reductases (SDR) family. ERG27 subfamily. As to quaternary structure, binds to the short form of prolactin receptor. In terms of processing, phosphorylated. Highly expressed in adrenal gland, liver, lung and thymus. Expressed in breast, ovaries, pituitary gland, pregnant uterus, prostate, kidney, lymph node, small intestine, spinal cord and trachea. Weakly expressed in all other tissues tested. As to expression, expressed in eye ciliary epithelial cells and neuroendocrine cells.

Its subcellular location is the endoplasmic reticulum membrane. It carries out the reaction 17beta-estradiol + NADP(+) = estrone + NADPH + H(+). It catalyses the reaction a 3beta-hydroxysteroid + NADP(+) = a 3-oxosteroid + NADPH + H(+). The enzyme catalyses 3-dehydro-4alpha-methylzymosterol + NADPH + H(+) = 4alpha-methylzymosterol + NADP(+). The catalysed reaction is zymosterone + NADPH + H(+) = zymosterol + NADP(+). It carries out the reaction 4alpha-methyl-5alpha-cholest-8-en-3-one + NADPH + H(+) = 4alpha-methyl-5alpha-cholest-8-en-3beta-ol + NADP(+). It catalyses the reaction 4alpha-methyl-5alpha-cholest-7-en-3beta-ol + NADP(+) = 4alpha-methyl-5alpha-cholest-7-en-3-one + NADPH + H(+). The enzyme catalyses 5alpha-cholest-8-en-3-one + NADPH + H(+) = 5alpha-cholest-8-en-3beta-ol + NADP(+). The catalysed reaction is 5alpha-androstane-3beta,17beta-diol + NADP(+) = 17beta-hydroxy-5alpha-androstan-3-one + NADPH + H(+). It carries out the reaction progesterone + NADPH + H(+) = 3beta-hydroxypregn-4-ene-20-one + NADP(+). Its pathway is steroid biosynthesis; estrogen biosynthesis. It participates in steroid biosynthesis; zymosterol biosynthesis; zymosterol from lanosterol: step 5/6. Estradiol 17-beta-dehydrogenase and dihydrotestosterone oxidoreductase activities are selectively inhibited by 4-methyl-4-aza-5alpha-androstane derivatives, such as 17beta-[(N-Heptyl)methylamino]-4-aza-5r-androstan-3-one and 17beta-(N-Decylformamido)-4-aza-5r-androstan-3-one. In terms of biological role, bifunctional enzyme involved in steroid-hormone metabolism and cholesterol biosynthesis. Catalyzes the NADP(H)-dependent reduction of estrogens and androgens and regulates the biological potency of these steroids. Converts estrone (E1) to a more potent estrogen, 17beta-estradiol (E2). Converts dihydrotestosterone (DHT) to its inactive form 5a-androstane-3b,17b-diol. Converts moderately progesterone to 3beta-hydroxypregn-4-ene-20-one, leading to its inactivation. Additionally, participates in the post-squalene cholesterol biosynthesis, as a 3-ketosteroid reductase. Functionally, does not have enzymatic activities toward E1 and DHT. This Homo sapiens (Human) protein is 3-keto-steroid reductase/17-beta-hydroxysteroid dehydrogenase 7 (HSD17B7).